Here is a 307-residue protein sequence, read N- to C-terminus: Histone deacetylase HDT1 (307 aa).

The segment covering 98–112 (EDEMDLDSEDEDEEL) has biased composition (acidic residues). The interval 98–280 (EDEMDLDSED…KSGGSVPCKP (183 aa)) is disordered. Residues 119–132 (ENGKADEKKQKSQE) show a composition bias toward basic and acidic residues. Residues 151–197 (DDDSDEDETDDSDEDETDDSDEGLSSEEGDDDSSDEDDTSDDEEEDT) show a composition bias toward acidic residues. Residues 198 to 211 (PTPKKPEVGKKRPA) are compositionally biased toward basic and acidic residues. A compositionally biased stretch (low complexity) spans 265 to 277 (SPKSAPKSGGSVP). A C2H2-type; degenerate zinc finger spans residues 276–299 (VPCKPCSKSFISETALQAHSRAKM).

It belongs to the histone deacetylase HD2 family. Multimer. Isolated as a trimer composed of 3 proteins of 39, 42 and 45 kDa, possibly a homotrimer with different phosphorylation status or a heterotrimer with HDT2 and/or HDT3. The N-terminus is blocked. Post-translationally, phosphorylated. Required for enzyme activity.

The protein localises to the nucleus. Its subcellular location is the nucleolus. Inhibited by 3-(4-Aroyl-1-methyl-1H-pyrrol-2-yl)-N-hydroxy-2-propenamides. 3-(1-methyl-4-phenylacetyl-1H-pyrrol-2-yl)-N-hydroxy-2-propenamide 1b and 3-[1-methyl-4-(3-phenyl-2-propenoyl)-1H-pyrrol-2-yl]-N-hydroxy-2-propenamide 1c are very potent inhibitors. Functionally, mediates the deacetylation of lysine residues on the N-terminal part of the core histones (H2A, H2B, H3 and H4). Histone deacetylation gives a tag for epigenetic repression and plays an important role in transcriptional regulation, cell cycle progression and developmental events. Able to deacetylate all 4 core histones. This Zea mays (Maize) protein is Histone deacetylase HDT1 (HDT1).